A 443-amino-acid polypeptide reads, in one-letter code: Sperm-associated antigen 4 protein (443 aa).

The span at 1–36 (MRRSPRSGSAASSHNHTPNFYSENSNSSHSATSGDS) shows a compositional bias: low complexity. The tract at residues 1–107 (MRRSPRSGSA…VRGGASEPSG (107 aa)) is disordered. 2 consecutive transmembrane segments (helical) span residues 137 to 157 (FLSLLFQVLSMVLSLAVDGLV) and 168 to 188 (FLFTAVSLLSIFLAALWWGLL). Positions 203–244 (TLSQYHHRVHSQGQQLQQLQAELNKLHKEVSSVRAAHSERVA) form a coiled coil. The 161-residue stretch at 267–427 (GASIDLEKTS…YRVRAHGVRT (161 aa)) folds into the SUN domain.

In terms of assembly, self-associates. Interacts with ODF1. May associate with microtubules. Interacts with SUN3 and SYNE1; suggesting the formation of a spermatogenesis-specific LINC complex; a SUN domain-based heterotrimer of SPAG4 and SUN3 may associate with SYNE1. Interacts with SEPT12 and LMNB1; during spermatogenesis. Isoform 1 is testis specific and is exclusively expressed in spermatids.

It is found in the membrane. Its subcellular location is the cytoplasm. The protein localises to the cytoskeleton. The protein resides in the nucleus envelope. It localises to the nucleus inner membrane. It is found in the flagellum axoneme. In terms of biological role, involved in spermatogenesis. Required for sperm head formation but not required to establish and maintain general polarity of the sperm head. Required for anchoring and organization of the manchette. Required for targeting of SUN3 and probably SYNE1 through a probable SUN1:SYNE3 LINC complex to the nuclear envelope and involved in accurate posterior sperm head localization of the complex. May anchor SUN3 the nuclear envelope. Involved in maintenance of the nuclear envelope integrity. May assist the organization and assembly of outer dense fibers (ODFs), a specific structure of the sperm tail. The protein is Sperm-associated antigen 4 protein (Spag4) of Mus musculus (Mouse).